The chain runs to 72 residues: Translation initiation factor IF-1 (72 aa).

The S1-like domain maps to 1-72 (MAKEDVIEVE…TRGRITYRFK (72 aa)).

This sequence belongs to the IF-1 family. Component of the 30S ribosomal translation pre-initiation complex which assembles on the 30S ribosome in the order IF-2 and IF-3, IF-1 and N-formylmethionyl-tRNA(fMet); mRNA recruitment can occur at any time during PIC assembly.

It localises to the cytoplasm. Functionally, one of the essential components for the initiation of protein synthesis. Stabilizes the binding of IF-2 and IF-3 on the 30S subunit to which N-formylmethionyl-tRNA(fMet) subsequently binds. Helps modulate mRNA selection, yielding the 30S pre-initiation complex (PIC). Upon addition of the 50S ribosomal subunit IF-1, IF-2 and IF-3 are released leaving the mature 70S translation initiation complex. This chain is Translation initiation factor IF-1, found in Listeria innocua serovar 6a (strain ATCC BAA-680 / CLIP 11262).